A 297-amino-acid polypeptide reads, in one-letter code: tRNA uridine(34) hydroxylase (297 aa).

The region spanning 137–232 (RGDDVVFFDG…YGEKYGDKGL (96 aa)) is the Rhodanese domain. The active-site Cysteine persulfide intermediate is C192.

Belongs to the TrhO family.

It catalyses the reaction uridine(34) in tRNA + AH2 + O2 = 5-hydroxyuridine(34) in tRNA + A + H2O. Its function is as follows. Catalyzes oxygen-dependent 5-hydroxyuridine (ho5U) modification at position 34 in tRNAs. This is tRNA uridine(34) hydroxylase from Corynebacterium urealyticum (strain ATCC 43042 / DSM 7109).